We begin with the raw amino-acid sequence, 314 residues long: Trihelix transcription factor ASR3 (314 aa).

The tract at residues 1-34 (MALEQLGLGVSAVDGGENSSAPSNDGGDDGVKTA) is disordered. The region spanning 38 to 104 (RWTRQEILVL…QCRKRWSNLA (67 aa)) is the Myb-like domain. A Nuclear localization signal motif is present at residues 84 to 91 (CKRHGVNR). An EAR 1 motif is present at residues 161 to 165 (LSLGL). Threonine 189 is modified (phosphothreonine; by MAPK4). The tract at residues 207 to 255 (CVADQGRVKEKQPEAANVEGGSTSQEERKRKRTSFGEKEEEEEEGETKK) is disordered. Positions 280–284 (LNLKL) match the EAR 2 motif.

As to quaternary structure, homodimer. Interacts directly with MPK4. Phosphorylated on Thr-189 by MPK4 in response to microbe-associated molecular patterns (MAMPs, e.g. flg22, elf18, chitin, and LPS). This phosphorylation enhances DNA-binding and thus negatively regulates immune gene expression.

It is found in the nucleus. Its function is as follows. Transcriptional repressor that binds DNA and plays a negative role in regulating microbe-associated molecular patterns-(MAMPs, e.g. flg22, elf18, chitin, and LPS) triggered immunity (PTI) by negatively regulating immune gene expression. The protein is Trihelix transcription factor ASR3 of Arabidopsis thaliana (Mouse-ear cress).